A 64-amino-acid polypeptide reads, in one-letter code: uncharacterized protein (64 aa).

This is an uncharacterized protein from Bacillus subtilis (strain 168).